Here is a 447-residue protein sequence, read N- to C-terminus: MVHVRFAPSPTGYLHVGNARIAVANALFALRYSGKFTLRLDDTDLERSRDEYAEAIAQDLRWMGIEWADTFRQRDNMDRYEAAADALKASGRLYPCFESEEELRYKRELRLKQGRAPVYDRAMLKMTPEQRAQAEANGKRPYWRFLLSDRTVGWRDGVLGPRQVKLQAISDPVVIRADGTPLYTFTSVVDDIATGVTHIIRGEDHISNSGVQTDLFEALGKVAPALAHLPLLMDADGGKLSKRIDSLTLRSLARDGIEPVALVSYLARLGSSRDPQPLTLAELAQEFDLDAFSASSARFDGSQLAALNRRTLQTMPFSAVQDRLPQGATEAFWEAVRGNLDMLAEARLWWDVVAGSIVPPVLTDEDNALLKQALPLLPQEPWDTTTWSVWTRAVKEASDRSGRALFRPLRLALTGEEHGPELAALLPLMGAERVRTRLTLTSGAMAG.

Positions 8–18 (PSPTGYLHVGN) match the 'HIGH' region motif. The 'KMSKS' region signature appears at 239–243 (KLSKR). K242 contributes to the ATP binding site.

This sequence belongs to the class-I aminoacyl-tRNA synthetase family. Glutamate--tRNA ligase type 1 subfamily. As to quaternary structure, monomer.

The protein resides in the cytoplasm. The enzyme catalyses tRNA(Glu) + L-glutamate + ATP = L-glutamyl-tRNA(Glu) + AMP + diphosphate. Functionally, catalyzes the attachment of glutamate to tRNA(Glu) in a two-step reaction: glutamate is first activated by ATP to form Glu-AMP and then transferred to the acceptor end of tRNA(Glu). In Granulibacter bethesdensis (strain ATCC BAA-1260 / CGDNIH1), this protein is Glutamate--tRNA ligase 2.